A 1171-amino-acid chain; its full sequence is Phytochrome B (1171 aa).

Residues 1–19 (MASGSRATPTRSPSSARPA) are compositionally biased toward low complexity. The tract at residues 1 to 53 (MASGSRATPTRSPSSARPAAPRHQHHHSQSSGGSTSRAGGGGGGGGGGGGGAA) is disordered. Gly residues predominate over residues 38 to 52 (AGGGGGGGGGGGGGA). Positions 259 to 442 (DVKLLCDTVV…AFGLQLNMEL (184 aa)) constitute a GAF domain. Cys-364 provides a ligand contact to phytochromobilin. 2 consecutive PAS domains span residues 661–732 (VARE…LRGD) and 795–866 (DYKA…MIVL). The Histidine kinase domain occupies 943-1161 (YIYQEIKNPL…FFHIVLELPQ (219 aa)).

It belongs to the phytochrome family. In terms of assembly, homodimer. Post-translationally, contains one covalently linked phytochromobilin chromophore.

Functionally, regulatory photoreceptor which exists in two forms that are reversibly interconvertible by light: the Pr form that absorbs maximally in the red region of the spectrum and the Pfr form that absorbs maximally in the far-red region. Photoconversion of Pr to Pfr induces an array of morphogenic responses, whereas reconversion of Pfr to Pr cancels the induction of those responses. Pfr controls the expression of a number of nuclear genes including those encoding the small subunit of ribulose-bisphosphate carboxylase, chlorophyll A/B binding protein, protochlorophyllide reductase, rRNA, etc. It also controls the expression of its own gene(s) in a negative feedback fashion. In Oryza sativa subsp. japonica (Rice), this protein is Phytochrome B (PHYB).